The sequence spans 93 residues: Alpha-conotoxin RVIIIA (93 aa).

The signal sequence occupies residues 1–20 (MMSKMGAMFVLLLLFTLASS). Positions 21–46 (QQEGDVQARKTHPKREFQRILLRSGR) are excised as a propeptide. 2 positions are modified to 4-carboxyglutamate: E63 and E68.

In terms of processing, contains 5 disulfide bonds. In terms of tissue distribution, expressed by the venom duct.

The protein resides in the secreted. Alpha-conotoxins act on postsynaptic membranes, they bind to the nicotinic acetylcholine receptors (nAChR) and thus inhibit them. This toxin provokes a nearly complete and slowly reversible inhibition of both the human adult (alpha-1-beta-1-epsilon-delta (CHRNA1-CHRNB1-CHRND-CHRNE)) and human fetal (alpha-1-beta-1-gamma-delta (CHRNA1-CHRNB1-CHRNG-CHRND)) neuromuscular nAChRs. It also reversibly blocks the neuromuscular alpha-7/CHRNA7 nAChR, the alpha-3-beta-2 (CHRNA3-CHRNB2) nAChR, the chimeric alpha-6 or -3/beta-3 or -2 (CHRNA6/CHRNA3-CHRNB2-CHRNB3) nAChR and with a low potency the alpha-4-beta-2 (CHRNA4-CHRNB2) nAChR. In addition, the toxin also inhibits the alpha-9-alpha-10 (CHRNA9-CHRNA10) nAChR with a high potency (IC(50)=187 nM). In Conus radiatus (Rayed cone), this protein is Alpha-conotoxin RVIIIA.